Here is a 160-residue protein sequence, read N- to C-terminus: MLNDKIKELITPTAKTLGYKVINVSFIVKPAILKIVIDRFDEKKVNVLDCQVFSKAISAVLDVENIIPGKYFLEVESAGIERSLMDLEDFIKFLGYTIQVKLVAAINENKKYIGVISNIKGQEITLNLQNDSTIAIDYDNIKVAKIVFTDEMFRQITKNY.

Belongs to the RimP family.

The protein resides in the cytoplasm. Functionally, required for maturation of 30S ribosomal subunits. In Orientia tsutsugamushi (strain Boryong) (Rickettsia tsutsugamushi), this protein is Ribosome maturation factor RimP.